A 458-amino-acid chain; its full sequence is Glycogen synthase (458 aa).

Residue K15 participates in ADP-alpha-D-glucose binding.

This sequence belongs to the glycosyltransferase 1 family. Bacterial/plant glycogen synthase subfamily.

It catalyses the reaction [(1-&gt;4)-alpha-D-glucosyl](n) + ADP-alpha-D-glucose = [(1-&gt;4)-alpha-D-glucosyl](n+1) + ADP + H(+). It participates in glycan biosynthesis; glycogen biosynthesis. In terms of biological role, synthesizes alpha-1,4-glucan chains using ADP-glucose. The chain is Glycogen synthase from Gloeobacter violaceus (strain ATCC 29082 / PCC 7421).